A 236-amino-acid chain; its full sequence is UPF0257 lipoprotein YnfC (236 aa).

A signal peptide spans 1–16 (MKKPLLLTLLCMILAG). Cys-17 carries the N-palmitoyl cysteine lipid modification. Cys-17 carries S-diacylglycerol cysteine lipidation.

The protein belongs to the UPF0257 family.

The protein resides in the cell membrane. In Salmonella typhi, this protein is UPF0257 lipoprotein YnfC.